The primary structure comprises 351 residues: Nicotinate-nucleotide--dimethylbenzimidazole phosphoribosyltransferase (351 aa).

Glutamate 317 acts as the Proton acceptor in catalysis.

Belongs to the CobT family.

The catalysed reaction is 5,6-dimethylbenzimidazole + nicotinate beta-D-ribonucleotide = alpha-ribazole 5'-phosphate + nicotinate + H(+). Its pathway is nucleoside biosynthesis; alpha-ribazole biosynthesis; alpha-ribazole from 5,6-dimethylbenzimidazole: step 1/2. Functionally, catalyzes the synthesis of alpha-ribazole-5'-phosphate from nicotinate mononucleotide (NAMN) and 5,6-dimethylbenzimidazole (DMB). This Bradyrhizobium sp. (strain ORS 278) protein is Nicotinate-nucleotide--dimethylbenzimidazole phosphoribosyltransferase.